Reading from the N-terminus, the 284-residue chain is 2-dehydro-3-deoxyphosphooctonate aldolase (284 aa).

Belongs to the KdsA family.

It localises to the cytoplasm. It catalyses the reaction D-arabinose 5-phosphate + phosphoenolpyruvate + H2O = 3-deoxy-alpha-D-manno-2-octulosonate-8-phosphate + phosphate. The protein operates within carbohydrate biosynthesis; 3-deoxy-D-manno-octulosonate biosynthesis; 3-deoxy-D-manno-octulosonate from D-ribulose 5-phosphate: step 2/3. It functions in the pathway bacterial outer membrane biogenesis; lipopolysaccharide biosynthesis. This Cronobacter sakazakii (strain ATCC BAA-894) (Enterobacter sakazakii) protein is 2-dehydro-3-deoxyphosphooctonate aldolase.